A 229-amino-acid polypeptide reads, in one-letter code: NAD(P)H-hydrate epimerase (229 aa).

Residues 10 to 217 (AINVDQELFN…ALQRKYDLNL (208 aa)) enclose the YjeF N-terminal domain. 60 to 64 (NNGGD) serves as a coordination point for (6S)-NADPHX. N61 and D125 together coordinate K(+). Residues 129–135 (GFSFKPP) and D158 contribute to the (6S)-NADPHX site. S161 provides a ligand contact to K(+).

It belongs to the NnrE/AIBP family. Requires K(+) as cofactor.

It catalyses the reaction (6R)-NADHX = (6S)-NADHX. The catalysed reaction is (6R)-NADPHX = (6S)-NADPHX. Its function is as follows. Catalyzes the epimerization of the S- and R-forms of NAD(P)HX, a damaged form of NAD(P)H that is a result of enzymatic or heat-dependent hydration. This is a prerequisite for the S-specific NAD(P)H-hydrate dehydratase to allow the repair of both epimers of NAD(P)HX. The protein is NAD(P)H-hydrate epimerase of Drosophila ananassae (Fruit fly).